A 514-amino-acid chain; its full sequence is Threonine synthase (514 aa).

K124 is subject to N6-(pyridoxal phosphate)lysine. 5 residues coordinate pyridoxal 5'-phosphate: G277, N278, F279, D281, and T449. The residue at position 467 (S467) is a Phosphoserine.

The protein belongs to the threonine synthase family. It depends on pyridoxal 5'-phosphate as a cofactor.

The enzyme catalyses O-phospho-L-homoserine + H2O = L-threonine + phosphate. It participates in amino-acid biosynthesis; L-threonine biosynthesis; L-threonine from L-aspartate: step 5/5. Its function is as follows. Catalyzes the gamma-elimination of phosphate from L-phosphohomoserine and the beta-addition of water to produce L-threonine. The sequence is that of Threonine synthase (THR4) from Saccharomyces cerevisiae (strain ATCC 204508 / S288c) (Baker's yeast).